The chain runs to 867 residues: MVASARVQKLVRRYKLAIATALAILLLQGLVVWSFSVLEDDEPGEKGRQKKSRPLDPSEGSKDTDSSAGRRGSAGRRHGRWRGRAESPGVPVAKVVRAVTSRHRTGRRIPPTPPPEAPGRQNLSGAAAEEALVGAAGFPHGDTGSVEGAPQPTDNSFTPKCEIVGKDALSALARASSKQCQQEIANVVCLHQAGSLMPKAVPRHCQRAGKMSPGIPWDEVRAQQPADGPPVRIAYMLVVHGRAIRQLKRLLKAVYHKQHFFYVHVDERSNYLHREVVELARQYDNVRVTPWRMVTIWGGASLLRMYLRSMQDLLEVPGWAWDFFINLSATDYPTRTNEELVAFLSKNRDKNFLKSHGRDNSRFIKKQGLDRLFHECDSHMWRLGERQIPAGIVVDGGSDWFVLTRSFVEYVVYTDDPLVAQLRQFYTYTLLPAESFFHTVLEISPACESLVDNNMRVTTWNRKMGSKSQYKHIVDWCGCSPNDFKPQDFLRLQQTARPTFFARKFEAVVNQEIIGQLDYYLYGNYPAGTPGLRSYWENVYDEPDGIHSLSDVTLTLYHSFSRLGLRRAEASLRAPGESSCRFEPRGLPSSVHLYFYDDHFQGYLVTQAVQSSAQGPAETLEMWLMPQGSLKLLGHSDQASRLQSLEVGQVGTEWDPKERLFRNFGGLLGPLDEPVAMQRWARGPNLTVTVVWIDPTYVVATSYDIVVDAETEVTQYKPPLSRPLRPGAWTVRLLQFWEPLGETRFLVLPLTFNRKLPLRKGKFSQMIAGPPHNEYMEQSFQGLSGILNLPQLEPAEEAARLHAELTGPALEAWTDGEQSSFWSVAGVCAVGPSACPSLELCRLTSWSSLSPDPKSELGPVKADGRLR.

The Cytoplasmic segment spans residues 1 to 15; sequence MVASARVQKLVRRYK. The helical; Signal-anchor for type II membrane protein transmembrane segment at 16-36 threads the bilayer; sequence LAIATALAILLLQGLVVWSFS. At 37–867 the chain is on the lumenal side; sequence VLEDDEPGEK…GPVKADGRLR (831 aa). A disordered region spans residues 41–122; it reads DEPGEKGRQK…PPPEAPGRQN (82 aa). The span at 53–65 shows a compositional bias: basic and acidic residues; that stretch reads RPLDPSEGSKDTD. The span at 73-82 shows a compositional bias: basic residues; that stretch reads SAGRRHGRWR. Asn-122 carries N-linked (GlcNAc...) asparagine glycosylation. 2 disulfides stabilise this stretch: Cys-161-Cys-189 and Cys-205-Cys-447. Residues Val-238, Asp-266, and 295–297 each bind UDP-alpha-D-xylose; that span reads TIW. A glycan (N-linked (GlcNAc...) asparagine) is linked at Asn-326. Residues 399 to 400, Ser-480, and 503 to 504 contribute to the UDP-alpha-D-xylose site; these read DW and RK. Intrachain disulfides connect Cys-580-Cys-835 and Cys-828-Cys-841. An N-linked (GlcNAc...) asparagine glycan is attached at Asn-685.

Belongs to the glycosyltransferase 14 family. XylT subfamily. In terms of assembly, monomer. It depends on Mg(2+) as a cofactor. The cofactor is Mn(2+). Post-translationally, contains disulfide bonds.

The protein resides in the golgi apparatus membrane. It localises to the secreted. It catalyses the reaction UDP-alpha-D-xylose + L-seryl-[protein] = 3-O-(beta-D-xylosyl)-L-seryl-[protein] + UDP + H(+). It functions in the pathway glycan metabolism; chondroitin sulfate biosynthesis. Its pathway is glycan metabolism; heparan sulfate biosynthesis. In terms of biological role, catalyzes the first step in the biosynthesis of chondroitin sulfate, heparan sulfate and dermatan sulfate proteoglycans, such as DCN. Transfers D-xylose from UDP-D-xylose to specific serine residues of the core protein. The sequence is that of Xylosyltransferase 2 (XYLT2) from Bos taurus (Bovine).